Here is a 46-residue protein sequence, read N- to C-terminus: Protein PsbN (46 aa).

The helical transmembrane segment at 10 to 30 threads the bilayer; sequence VSIAVLTALLGLTGFGIYTAF.

This sequence belongs to the PsbN family.

It is found in the cellular thylakoid membrane. Functionally, may play a role in photosystem I and II biogenesis. This Synechococcus sp. (strain RCC307) protein is Protein PsbN.